Consider the following 271-residue polypeptide: Formamidopyrimidine-DNA glycosylase (271 aa).

Catalysis depends on Pro2, which acts as the Schiff-base intermediate with DNA. Catalysis depends on Glu3, which acts as the Proton donor. The Proton donor; for beta-elimination activity role is filled by Lys57. The DNA site is built by His90, Arg109, and Arg151. Residues 236–270 form an FPG-type zinc finger; sequence MVYGRAGEACVTCKTKLQEIRQSNRSSVFCPSCQQ. Residue Arg260 is the Proton donor; for delta-elimination activity of the active site.

This sequence belongs to the FPG family. Monomer. Zn(2+) is required as a cofactor.

The catalysed reaction is Hydrolysis of DNA containing ring-opened 7-methylguanine residues, releasing 2,6-diamino-4-hydroxy-5-(N-methyl)formamidopyrimidine.. The enzyme catalyses 2'-deoxyribonucleotide-(2'-deoxyribose 5'-phosphate)-2'-deoxyribonucleotide-DNA = a 3'-end 2'-deoxyribonucleotide-(2,3-dehydro-2,3-deoxyribose 5'-phosphate)-DNA + a 5'-end 5'-phospho-2'-deoxyribonucleoside-DNA + H(+). In terms of biological role, involved in base excision repair of DNA damaged by oxidation or by mutagenic agents. Acts as a DNA glycosylase that recognizes and removes damaged bases. Has a preference for oxidized purines, such as 7,8-dihydro-8-oxoguanine (8-oxoG). Has AP (apurinic/apyrimidinic) lyase activity and introduces nicks in the DNA strand. Cleaves the DNA backbone by beta-delta elimination to generate a single-strand break at the site of the removed base with both 3'- and 5'-phosphates. In Colwellia psychrerythraea (strain 34H / ATCC BAA-681) (Vibrio psychroerythus), this protein is Formamidopyrimidine-DNA glycosylase.